Consider the following 788-residue polypeptide: Mediator of RNA polymerase II transcription subunit 15 (788 aa).

The interaction with SREBF1 stretch occupies residues 9-73; sequence DWRSTAFRQK…IHFRDIHNKK (65 aa). 2 disordered regions span residues 95-139 and 260-329; these read GAAG…MAPH and QQQA…PLVS. Over residues 108 to 117 the composition is skewed to gly residues; that stretch reads QSLGGMGSLG. A compositionally biased stretch (low complexity) spans 260-269; the sequence is QQQALQAQPP. The segment covering 270 to 284 has biased composition (pro residues); it reads IQQPPMQQPQPPPSQ. Composition is skewed to low complexity over residues 285–294 and 309–329; these read ALPQQLQQMH and PVAQ…PLVS. Arginine 349 bears the Asymmetric dimethylarginine mark. The tract at residues 412 to 530 is disordered; the sequence is SSSIPLGRQP…PAGSSQAEEQ (119 aa). Residues 426 to 446 are compositionally biased toward low complexity; sequence SQSSLPMLSSPSPGQQVQTPQ. A compositionally biased stretch (pro residues) spans 447–459; it reads SMPPPPQPSPQPG. The segment covering 460–482 has biased composition (low complexity); that stretch reads QPSSQPNSNVSSGPAPSPSSFLP. Polar residues-rich tracts occupy residues 493–503 and 511–529; these read VTARTPQNFSV and TPVN…QAEE. Residues 547 to 564 carry the Nuclear localization signal motif; sequence RRMINKIDKNEDRKKDLS. Threonine 603 is subject to Phosphothreonine.

This sequence belongs to the Mediator complex subunit 15 family. Component of the Mediator complex, which is composed of MED1, MED4, MED6, MED7, MED8, MED9, MED10, MED11, MED12, MED13, MED13L, MED14, MED15, MED16, MED17, MED18, MED19, MED20, MED21, MED22, MED23, MED24, MED25, MED26, MED27, MED29, MED30, MED31, CCNC, CDK8 and CDC2L6/CDK11. The MED12, MED13, CCNC and CDK8 subunits form a distinct module termed the CDK8 module. Mediator containing the CDK8 module is less active than Mediator lacking this module in supporting transcriptional activation. Individual preparations of the Mediator complex lacking one or more distinct subunits have been variously termed ARC, CRSP, DRIP, PC2, SMCC and TRAP. Interacts with SMAD2, SMAD3, SREBF1 and SREBF2. Interacts with WWTR1. Interacts with TRIM11. Post-translationally, ubiquitinated by TRIM11, leading to proteasomal degradation. As to expression, expressed in all tissues examined, including heart, brain, lung, spleen, thymus, pancreas, blood leukocyte and placenta. However, the level of expression varied, with highest expression in the placenta and peripheral blood and lowest in the pancreas and kidney.

It is found in the cytoplasm. The protein localises to the nucleus. Functionally, component of the Mediator complex, a coactivator involved in the regulated transcription of nearly all RNA polymerase II-dependent genes. Mediator functions as a bridge to convey information from gene-specific regulatory proteins to the basal RNA polymerase II transcription machinery. Mediator is recruited to promoters by direct interactions with regulatory proteins and serves as a scaffold for the assembly of a functional preinitiation complex with RNA polymerase II and the general transcription factors. Required for cholesterol-dependent gene regulation. Positively regulates the Nodal signaling pathway. The sequence is that of Mediator of RNA polymerase II transcription subunit 15 (MED15) from Homo sapiens (Human).